Reading from the N-terminus, the 237-residue chain is Probable GTP-binding protein EngB (237 aa).

An EngB-type G domain is found at 23 to 209; it reads AVPEVAFAGR…QAVIAGWLNL (187 aa). GTP is bound by residues 31–38, 58–62, 82–85, 149–152, and 187–190; these read GRSNAGKS, GRTQH, DLPG, TKAD, and LFSS. The Mg(2+) site is built by S38 and T60. Residues 214-237 form a disordered region; sequence KAEREPAAANSVPPAVPPASDPAA. Residues 227–237 show a composition bias toward pro residues; sequence PAVPPASDPAA.

It belongs to the TRAFAC class TrmE-Era-EngA-EngB-Septin-like GTPase superfamily. EngB GTPase family. Mg(2+) serves as cofactor.

In terms of biological role, necessary for normal cell division and for the maintenance of normal septation. In Cupriavidus taiwanensis (strain DSM 17343 / BCRC 17206 / CCUG 44338 / CIP 107171 / LMG 19424 / R1) (Ralstonia taiwanensis (strain LMG 19424)), this protein is Probable GTP-binding protein EngB.